Reading from the N-terminus, the 285-residue chain is MLYLTKISNAGSEFTENEQKIADFLRARVSELKSVSSRQMAKQLGISQSSIVKFAQKLGAQGFTELRMALIGEYSASREKTNATALHLHSSITSDDSLEVIARKLNREKELALEQTCALFDYARLQKIIDVISKAQFIQITGLGGSALVGRDLSFKLMKIGYRVACEADTHVQATVSQALKKGDVQIAISYSGSKKEIVLCAEAARKQGATVIAITSLADSPLRRLAHFTLDTVSGETEWRSSSMSTRTAQNSVTDLLFVGLVQLNDVESLKMIQRSSELTQRLK.

The region spanning M1–S77 is the HTH rpiR-type domain. The H-T-H motif DNA-binding region spans S37–Q56. The 141-residue stretch at I128–V268 folds into the SIS domain.

As to quaternary structure, homotetramer.

It participates in amino-sugar metabolism; N-acetylmuramate degradation [regulation]. Functionally, represses the expression of the murPQ operon involved in the uptake and degradation of N-acetylmuramic acid (MurNAc). Binds to two adjacent inverted repeats within the operator region. MurNAc 6-phosphate, the substrate of MurQ, is the specific inducer that weakens binding of MurR to the operator. In Escherichia coli (strain B / BL21-DE3), this protein is HTH-type transcriptional regulator MurR.